An 884-amino-acid chain; its full sequence is Probable LRR receptor-like serine/threonine-protein kinase PAM74 (884 aa).

Positions 1–23 are cleaved as a signal peptide; the sequence is MDSPCWLLLLLLGAFAIIGCVQA. Over 24–510 the chain is Extracellular; sequence QDQQEFISLD…TEKNSKKKFP (487 aa). N-linked (GlcNAc...) asparagine glycosylation is found at Asn-143, Asn-182, Asn-200, Asn-256, Asn-289, Asn-400, Asn-403, Asn-417, Asn-433, Asn-444, Asn-465, and Asn-470. LRR repeat units lie at residues 412 to 433, 436 to 457, and 460 to 480; these read RVLS…AIQN, HLEK…FLAQ, and SLVI…QGLR. Residues 511–531 traverse the membrane as a helical segment; it reads VVIVASVASVAIIVAVLVIIF. Topologically, residues 532 to 884 are cytoplasmic; the sequence is VLSKKKSSTV…FDTELFPRAR (353 aa). Thr-570 carries the phosphothreonine modification. The region spanning 579 to 852 is the Protein kinase domain; the sequence is NNFQRVVGEG…QVANELKECL (274 aa). ATP-binding positions include 585–593 and Lys-607; that span reads VGEGGFGVV. At Tyr-652 the chain carries Phosphotyrosine. Asp-704 acts as the Proton acceptor in catalysis. The residue at position 738 (Ser-738) is a Phosphoserine. Thr-739 and Thr-744 each carry phosphothreonine. Phosphotyrosine is present on Tyr-752.

This sequence belongs to the protein kinase superfamily. Ser/Thr protein kinase family. Binds to the ammonium transporter AMT1-1.

It localises to the membrane. It carries out the reaction L-seryl-[protein] + ATP = O-phospho-L-seryl-[protein] + ADP + H(+). The enzyme catalyses L-threonyl-[protein] + ATP = O-phospho-L-threonyl-[protein] + ADP + H(+). In terms of biological role, required for accurate photosynthesis. This chain is Probable LRR receptor-like serine/threonine-protein kinase PAM74 (PAM74), found in Arabidopsis thaliana (Mouse-ear cress).